Reading from the N-terminus, the 447-residue chain is Argininosuccinate synthase (447 aa).

Residues 17-25 (AFSGGLDTS) and A43 each bind ATP. Position 99 (Y99) interacts with L-citrulline. Residues G129 and T131 each contribute to the ATP site. The L-aspartate site is built by T131, N135, and D136. N135 is a binding site for L-citrulline. Residue D136 coordinates ATP. Positions 139 and 192 each coordinate L-citrulline. Residue D194 participates in ATP binding. The L-citrulline site is built by T201, E203, and E280.

The protein belongs to the argininosuccinate synthase family. Type 2 subfamily. In terms of assembly, homotetramer.

Its subcellular location is the cytoplasm. The enzyme catalyses L-citrulline + L-aspartate + ATP = 2-(N(omega)-L-arginino)succinate + AMP + diphosphate + H(+). The protein operates within amino-acid biosynthesis; L-arginine biosynthesis; L-arginine from L-ornithine and carbamoyl phosphate: step 2/3. This chain is Argininosuccinate synthase, found in Salmonella dublin (strain CT_02021853).